A 212-amino-acid chain; its full sequence is Pyridoxine/pyridoxamine 5'-phosphate oxidase (212 aa).

Residues 8-11 and Lys-66 each bind substrate; that span reads RREY. FMN contacts are provided by residues 61–66, 76–77, Arg-82, Lys-83, and Gln-105; these read RIVLLK and FT. Tyr-123, Arg-127, and Ser-131 together coordinate substrate. FMN-binding positions include 140-141 and Trp-185; that span reads QS. Substrate is bound at residue 191–193; the sequence is RLH. Arg-195 is a binding site for FMN.

The protein belongs to the pyridoxamine 5'-phosphate oxidase family. Homodimer. It depends on FMN as a cofactor.

The catalysed reaction is pyridoxamine 5'-phosphate + O2 + H2O = pyridoxal 5'-phosphate + H2O2 + NH4(+). The enzyme catalyses pyridoxine 5'-phosphate + O2 = pyridoxal 5'-phosphate + H2O2. It participates in cofactor metabolism; pyridoxal 5'-phosphate salvage; pyridoxal 5'-phosphate from pyridoxamine 5'-phosphate: step 1/1. It functions in the pathway cofactor metabolism; pyridoxal 5'-phosphate salvage; pyridoxal 5'-phosphate from pyridoxine 5'-phosphate: step 1/1. In terms of biological role, catalyzes the oxidation of either pyridoxine 5'-phosphate (PNP) or pyridoxamine 5'-phosphate (PMP) into pyridoxal 5'-phosphate (PLP). The sequence is that of Pyridoxine/pyridoxamine 5'-phosphate oxidase from Shewanella pealeana (strain ATCC 700345 / ANG-SQ1).